Reading from the N-terminus, the 205-residue chain is Small ribosomal subunit protein uS4 (205 aa).

The span at 1–16 shows a compositional bias: basic and acidic residues; the sequence is MSKRESAKHKIDRRLG. Residues 1-46 are disordered; it reads MSKRESAKHKIDRRLGENIWGRPKSPVNRREYGPGQHGQRRKGKLS. Residues 94 to 157 form the S4 RNA-binding domain; that stretch reads SRLDAVVYRA…KQLAIVLEAV (64 aa).

Belongs to the universal ribosomal protein uS4 family. Part of the 30S ribosomal subunit. Contacts protein S5. The interaction surface between S4 and S5 is involved in control of translational fidelity.

One of the primary rRNA binding proteins, it binds directly to 16S rRNA where it nucleates assembly of the body of the 30S subunit. In terms of biological role, with S5 and S12 plays an important role in translational accuracy. This is Small ribosomal subunit protein uS4 from Brucella abortus (strain S19).